Here is a 321-residue protein sequence, read N- to C-terminus: uncharacterized protein (321 aa).

It belongs to the NAD(P)-dependent epimerase/dehydratase family.

This is an uncharacterized protein from Staphylococcus aureus (strain MRSA252).